Consider the following 660-residue polypeptide: GTP-binding protein BRASSINAZOLE INSENSITIVE PALE GREEN 2, chloroplastic (660 aa).

The N-terminal 53 residues, 1-53, are a transit peptide targeting the chloroplast; the sequence is MVVLISSTVTICNVKPKLEDGNFRVSRLIHRPEVPFFSGLSNEKKKKCAVSVM. Disordered regions lie at residues 127–158 and 191–212; these read EGDE…DDEM and NDVE…TEEK. Positions 130–158 are enriched in acidic residues; the sequence is EHVENDELAGFEMVDDDADEEEEGEDDEM. One can recognise a CP-type G domain in the interval 273-457; it reads STRLIKPMSN…MYDTPGLLHP (185 aa).

This sequence belongs to the TRAFAC class YlqF/YawG GTPase family. As to quaternary structure, binds to chloroplast 16S and 23S ribosomal RNAs. In terms of tissue distribution, mostly expressed in stems, petioles, leaves and flowers and, at low levels, also in roots.

The protein localises to the plastid. Its subcellular location is the chloroplast stroma. Required for brassinosteroid- (BR) mediated post-transcriptional and translational regulation in the chloroplast, including accumulation of chloroplast rRNA. Involved in chloroplast differentiation. The protein is GTP-binding protein BRASSINAZOLE INSENSITIVE PALE GREEN 2, chloroplastic of Arabidopsis thaliana (Mouse-ear cress).